The sequence spans 187 residues: Large ribosomal subunit protein uL6 (187 aa).

It belongs to the universal ribosomal protein uL6 family. As to quaternary structure, part of the 50S ribosomal subunit.

In terms of biological role, this protein binds to the 23S rRNA, and is important in its secondary structure. It is located near the subunit interface in the base of the L7/L12 stalk, and near the tRNA binding site of the peptidyltransferase center. The protein is Large ribosomal subunit protein uL6 of Chloroflexus aggregans (strain MD-66 / DSM 9485).